We begin with the raw amino-acid sequence, 633 residues long: Probable alkaline/neutral invertase A, chloroplastic (633 aa).

The transit peptide at 1–71 (MNAITFLGNS…TNAVPFCTDR (71 aa)) directs the protein to the chloroplast. Residue Ser-623 is modified to Phosphoserine.

It belongs to the glycosyl hydrolase 100 family. Expressed in flowers.

It is found in the plastid. Its subcellular location is the chloroplast. The enzyme catalyses Hydrolysis of terminal non-reducing beta-D-fructofuranoside residues in beta-D-fructofuranosides.. Functionally, chloroplastic invertase that cleaves sucrose into glucose and fructose and may participate in the carbon flux between the cytosol and plastids in leaves. The chain is Probable alkaline/neutral invertase A, chloroplastic from Arabidopsis thaliana (Mouse-ear cress).